Here is a 1003-residue protein sequence, read N- to C-terminus: Glycine--tRNA ligase (1003 aa).

The tract at residues 1 to 310 (MSSQPLTLQT…VTPKKIPTIC (310 aa)) is glycine--tRNA ligase alpha subunit. The segment at 311–1003 (QPEDFLLEIG…CFGFYAWGVL (693 aa)) is glycine--tRNA ligase beta subunit.

It belongs to the class-II aminoacyl-tRNA synthetase family.

The protein resides in the cytoplasm. The enzyme catalyses tRNA(Gly) + glycine + ATP = glycyl-tRNA(Gly) + AMP + diphosphate. The protein is Glycine--tRNA ligase (glyQS) of Chlamydia trachomatis serovar D (strain ATCC VR-885 / DSM 19411 / UW-3/Cx).